The following is a 123-amino-acid chain: WAP four-disulfide core domain protein 5 (123 aa).

A signal peptide spans 1 to 24 (MRIQSLLLLGALLAVGSQLPAVFG). 2 consecutive WAP domains span residues 27-73 (KGEK…CVPR) and 74-121 (VSVK…RDPA). Cystine bridges form between Cys34-Cys62, Cys41-Cys66, Cys49-Cys61, Cys55-Cys70, Cys81-Cys109, Cys88-Cys113, Cys96-Cys108, and Cys102-Cys117.

The protein resides in the secreted. In terms of biological role, putative acid-stable proteinase inhibitor. The protein is WAP four-disulfide core domain protein 5 (WFDC5) of Chlorocebus aethiops (Green monkey).